A 204-amino-acid polypeptide reads, in one-letter code: Spermatogenesis-associated protein 46 (204 aa).

The disordered stretch occupies residues 101 to 120; it reads SSSSQENTYPREANRKSKHG.

In terms of tissue distribution, testis-specific.

The protein localises to the nucleus membrane. In terms of biological role, plays a role in spermiogenesis and fertilization. This is Spermatogenesis-associated protein 46 (Spata46) from Mus musculus (Mouse).